A 141-amino-acid polypeptide reads, in one-letter code: Glutamyl-tRNA(Gln) amidotransferase subunit C, chloroplastic/mitochondrial (141 aa).

Belongs to the GatC family. In terms of assembly, subunit of the heterotrimeric GatCAB amidotransferase (AdT) complex, composed of A, B and C subunits.

It is found in the mitochondrion. The protein resides in the plastid. The protein localises to the chloroplast. It carries out the reaction L-glutamyl-tRNA(Gln) + L-glutamine + ATP + H2O = L-glutaminyl-tRNA(Gln) + L-glutamate + ADP + phosphate + H(+). Its function is as follows. Allows the formation of correctly charged Gln-tRNA(Gln) through the transamidation of misacylated Glu-tRNA(Gln) in chloroplasts and mitochondria. The reaction takes place in the presence of glutamine and ATP through an activated gamma-phospho-Glu-tRNA(Gln). In Populus trichocarpa (Western balsam poplar), this protein is Glutamyl-tRNA(Gln) amidotransferase subunit C, chloroplastic/mitochondrial.